Reading from the N-terminus, the 429-residue chain is Glycine betaine monooxygenase oxygenase subunit (429 aa).

Residues 56–163 form the Rieske domain; sequence WLIAGMTCEI…VKTAGGYIFI (108 aa). The [2Fe-2S] cluster site is built by Cys98, His100, Cys118, and His121. Positions 217 and 222 each coordinate Fe cation.

It belongs to the bacterial ring-hydroxylating dioxygenase alpha subunit family. The system is composed of an oxygenase subunit (GbcA) and a reductase subunit (GbcB). It depends on [2Fe-2S] cluster as a cofactor. Fe cation is required as a cofactor.

The enzyme catalyses glycine betaine + NADH + O2 + H(+) = N,N-dimethylglycine + formaldehyde + NAD(+) + H2O. Its function is as follows. Involved in degradation of glycine betaine. Part of a Rieske-type oxygenase system that catalyzes the conversion of glycine betaine (GB) to dimethylglycine (DMG). This subunit is the terminal oxygenase component of the system. This chain is Glycine betaine monooxygenase oxygenase subunit, found in Pseudomonas aeruginosa (strain UCBPP-PA14).